Reading from the N-terminus, the 794-residue chain is Phenylalanine--tRNA ligase beta subunit (794 aa).

The region spanning 39–148 (APAFDNVVVA…SDAPVGQAIR (110 aa)) is the tRNA-binding domain. A B5 domain is found at 399–474 (PVRKPVLLRT…RLYGYDNIPS (76 aa)). Asp-452, Asp-458, Glu-461, and Glu-462 together coordinate Mg(2+). One can recognise an FDX-ACB domain in the interval 700–793 (SKFPPVIRDL…FEQAFGAQLR (94 aa)).

It belongs to the phenylalanyl-tRNA synthetase beta subunit family. Type 1 subfamily. Tetramer of two alpha and two beta subunits. The cofactor is Mg(2+).

It localises to the cytoplasm. The catalysed reaction is tRNA(Phe) + L-phenylalanine + ATP = L-phenylalanyl-tRNA(Phe) + AMP + diphosphate + H(+). The chain is Phenylalanine--tRNA ligase beta subunit from Dechloromonas aromatica (strain RCB).